We begin with the raw amino-acid sequence, 89 residues long: Small ribosomal subunit protein uS15 (89 aa).

Belongs to the universal ribosomal protein uS15 family. In terms of assembly, part of the 30S ribosomal subunit. Forms a bridge to the 50S subunit in the 70S ribosome, contacting the 23S rRNA.

One of the primary rRNA binding proteins, it binds directly to 16S rRNA where it helps nucleate assembly of the platform of the 30S subunit by binding and bridging several RNA helices of the 16S rRNA. In terms of biological role, forms an intersubunit bridge (bridge B4) with the 23S rRNA of the 50S subunit in the ribosome. In Synechococcus elongatus (strain ATCC 33912 / PCC 7942 / FACHB-805) (Anacystis nidulans R2), this protein is Small ribosomal subunit protein uS15.